We begin with the raw amino-acid sequence, 393 residues long: S-adenosylmethionine decarboxylase proenzyme (393 aa).

Active-site residues include Glu11 and Glu14. Ser71 (schiff-base intermediate with substrate; via pyruvic acid) is an active-site residue. Ser71 carries the post-translational modification Pyruvic acid (Ser); by autocatalysis. Cys85 serves as the catalytic Proton donor; for catalytic activity. Residues Ser236 and His249 each act as proton acceptor; for processing activity in the active site.

The protein belongs to the eukaryotic AdoMetDC family. The cofactor is pyruvate. In terms of processing, is synthesized initially as an inactive proenzyme. Formation of the active enzyme involves a self-maturation process in which the active site pyruvoyl group is generated from an internal serine residue via an autocatalytic post-translational modification. Two non-identical subunits are generated from the proenzyme in this reaction, and the pyruvate is formed at the N-terminus of the alpha chain, which is derived from the carboxyl end of the proenzyme. The post-translation cleavage follows an unusual pathway, termed non-hydrolytic serinolysis, in which the side chain hydroxyl group of the serine supplies its oxygen atom to form the C-terminus of the beta chain, while the remainder of the serine residue undergoes an oxidative deamination to produce ammonia and the pyruvoyl group blocking the N-terminus of the alpha chain.

It carries out the reaction S-adenosyl-L-methionine + H(+) = S-adenosyl 3-(methylsulfanyl)propylamine + CO2. Its pathway is amine and polyamine biosynthesis; S-adenosylmethioninamine biosynthesis; S-adenosylmethioninamine from S-adenosyl-L-methionine: step 1/1. This is S-adenosylmethionine decarboxylase proenzyme (SAMDC) from Hordeum chilense (Barley).